The following is a 101-amino-acid chain: Small ribosomal subunit protein uS14 (101 aa).

This sequence belongs to the universal ribosomal protein uS14 family. In terms of assembly, part of the 30S ribosomal subunit. Contacts proteins S3 and S10.

Its function is as follows. Binds 16S rRNA, required for the assembly of 30S particles and may also be responsible for determining the conformation of the 16S rRNA at the A site. In Haemophilus influenzae (strain PittGG), this protein is Small ribosomal subunit protein uS14.